Reading from the N-terminus, the 276-residue chain is Large ribosomal subunit protein uL2 (276 aa).

Disordered stretches follow at residues Pro-29–Gly-55 and His-219–Arg-276. Basic residues predominate over residues Thr-259–Arg-276.

It belongs to the universal ribosomal protein uL2 family. Part of the 50S ribosomal subunit. Forms a bridge to the 30S subunit in the 70S ribosome.

One of the primary rRNA binding proteins. Required for association of the 30S and 50S subunits to form the 70S ribosome, for tRNA binding and peptide bond formation. It has been suggested to have peptidyltransferase activity; this is somewhat controversial. Makes several contacts with the 16S rRNA in the 70S ribosome. This chain is Large ribosomal subunit protein uL2, found in Rippkaea orientalis (strain PCC 8801 / RF-1) (Cyanothece sp. (strain PCC 8801)).